Reading from the N-terminus, the 390-residue chain is GTPase Obg (390 aa).

Residues 1–159 (MKFVDEASIL…RELLLELMLL (159 aa)) enclose the Obg domain. A disordered region spans residues 127-147 (NTRFKSSVNRTPRQKTNGTPG). Over residues 129 to 145 (RFKSSVNRTPRQKTNGT) the composition is skewed to polar residues. In terms of domain architecture, OBG-type G spans 160-333 (ADVGMLGMPN…LCWDVMTFII (174 aa)). GTP-binding positions include 166-173 (GMPNAGKS), 191-195 (FTTLV), 213-216 (DIPG), 283-286 (NKID), and 314-316 (SAA). Mg(2+)-binding residues include S173 and T193.

The protein belongs to the TRAFAC class OBG-HflX-like GTPase superfamily. OBG GTPase family. As to quaternary structure, monomer. Mg(2+) serves as cofactor.

Its subcellular location is the cytoplasm. Functionally, an essential GTPase which binds GTP, GDP and possibly (p)ppGpp with moderate affinity, with high nucleotide exchange rates and a fairly low GTP hydrolysis rate. Plays a role in control of the cell cycle, stress response, ribosome biogenesis and in those bacteria that undergo differentiation, in morphogenesis control. In Escherichia coli O157:H7, this protein is GTPase Obg.